An 84-amino-acid chain; its full sequence is Large ribosomal subunit protein bL27 (84 aa).

The segment at 1–23 (MAHKKGASSSRNGRESAAQRLGV) is disordered.

It belongs to the bacterial ribosomal protein bL27 family.

This chain is Large ribosomal subunit protein bL27, found in Salinispora arenicola (strain CNS-205).